Consider the following 350-residue polypeptide: UDP-3-O-acylglucosamine N-acyltransferase (350 aa).

Residue His244 is the Proton acceptor of the active site.

It belongs to the transferase hexapeptide repeat family. LpxD subfamily. As to quaternary structure, homotrimer.

It catalyses the reaction a UDP-3-O-[(3R)-3-hydroxyacyl]-alpha-D-glucosamine + a (3R)-hydroxyacyl-[ACP] = a UDP-2-N,3-O-bis[(3R)-3-hydroxyacyl]-alpha-D-glucosamine + holo-[ACP] + H(+). It participates in bacterial outer membrane biogenesis; LPS lipid A biosynthesis. In terms of biological role, catalyzes the N-acylation of UDP-3-O-acylglucosamine using 3-hydroxyacyl-ACP as the acyl donor. Is involved in the biosynthesis of lipid A, a phosphorylated glycolipid that anchors the lipopolysaccharide to the outer membrane of the cell. The chain is UDP-3-O-acylglucosamine N-acyltransferase from Janthinobacterium sp. (strain Marseille) (Minibacterium massiliensis).